Here is a 246-residue protein sequence, read N- to C-terminus: 2-C-methyl-D-erythritol 4-phosphate cytidylyltransferase (246 aa).

This sequence belongs to the IspD/TarI cytidylyltransferase family. IspD subfamily.

The enzyme catalyses 2-C-methyl-D-erythritol 4-phosphate + CTP + H(+) = 4-CDP-2-C-methyl-D-erythritol + diphosphate. The protein operates within isoprenoid biosynthesis; isopentenyl diphosphate biosynthesis via DXP pathway; isopentenyl diphosphate from 1-deoxy-D-xylulose 5-phosphate: step 2/6. Functionally, catalyzes the formation of 4-diphosphocytidyl-2-C-methyl-D-erythritol from CTP and 2-C-methyl-D-erythritol 4-phosphate (MEP). The protein is 2-C-methyl-D-erythritol 4-phosphate cytidylyltransferase of Clostridium tetani (strain Massachusetts / E88).